Here is a 610-residue protein sequence, read N- to C-terminus: Fimbrin (610 aa).

2 EF-hand domains span residues 7 to 42 (SEIS…CGEK) and 43 to 78 (VTGV…ARQH). Ca(2+)-binding residues include Asp20, Asn22, Asp24, Gln26, Glu31, Asp56, Asp58, Asn60, Ser62, and Glu67. Actin-binding stretches follow at residues 102-365 (YSGS…NTHP) and 366-608 (ALEP…QVEM). Calponin-homology (CH) domains lie at 116-232 (DEEK…KIGL), 260-365 (LPVE…NTHP), 379-488 (TREE…RGHV), and 501-608 (PIAD…QVEM).

Its function is as follows. Binds to actin. This is Fimbrin (fimA) from Dictyostelium discoideum (Social amoeba).